Reading from the N-terminus, the 488-residue chain is Alpha-ketoglutaric semialdehyde dehydrogenase (488 aa).

NAD(+) contacts are provided by residues K180 and 233 to 238; that span reads GSNQVG. Catalysis depends on E255, which acts as the Proton acceptor. The Nucleophile role is filled by C289. NAD(+) is bound by residues Q336 and E390.

Belongs to the aldehyde dehydrogenase family. In terms of assembly, homotetramer.

It catalyses the reaction 2,5-dioxopentanoate + NADP(+) + H2O = 2-oxoglutarate + NADPH + 2 H(+). The enzyme catalyses 2,5-dioxopentanoate + NAD(+) + H2O = 2-oxoglutarate + NADH + 2 H(+). Its function is as follows. Catalyzes the NAD(P)(+)-dependent oxidation of alpha-ketoglutaric semialdehyde (alphaKGSA) to alpha-ketoglutarate. Prefers NADP(+) to NAD(+) as a cosubstrate. In vitro, can also use various aldehydes. This chain is Alpha-ketoglutaric semialdehyde dehydrogenase, found in Bacillus subtilis (strain 168).